A 381-amino-acid chain; its full sequence is tRNA pseudouridine synthase D (381 aa).

Catalysis depends on Asp81, which acts as the Nucleophile. The 176-residue stretch at 160–335 folds into the TRUD domain; the sequence is GMPNYFGSQR…TLGSRRFFWV (176 aa).

Belongs to the pseudouridine synthase TruD family.

It catalyses the reaction uridine(13) in tRNA = pseudouridine(13) in tRNA. Responsible for synthesis of pseudouridine from uracil-13 in transfer RNAs. This is tRNA pseudouridine synthase D from Helicobacter pylori (strain J99 / ATCC 700824) (Campylobacter pylori J99).